A 178-amino-acid chain; its full sequence is Probable inosine/xanthosine triphosphatase (178 aa).

The protein belongs to the YjjX NTPase family. In terms of assembly, homodimer. Requires Mg(2+) as cofactor. Mn(2+) is required as a cofactor.

The catalysed reaction is XTP + H2O = XDP + phosphate + H(+). The enzyme catalyses ITP + H2O = IDP + phosphate + H(+). Phosphatase that hydrolyzes non-canonical purine nucleotides such as XTP and ITP to their respective diphosphate derivatives. Probably excludes non-canonical purines from DNA/RNA precursor pool, thus preventing their incorporation into DNA/RNA and avoiding chromosomal lesions. The sequence is that of Probable inosine/xanthosine triphosphatase from Pyrobaculum calidifontis (strain DSM 21063 / JCM 11548 / VA1).